The chain runs to 391 residues: Protein ABCI12, chloroplastic (391 aa).

Residues 1 to 63 (MNHSNLANPT…LAAKRVFIVR (63 aa)) constitute a chloroplast transit peptide. Helical transmembrane passes span 134 to 154 (ANLV…ILVL), 168 to 188 (LLSG…PPML), 229 to 249 (VGST…ICLA), 263 to 283 (FLFP…TLLL), and 370 to 390 (FASV…EYFL).

Its subcellular location is the plastid. The protein localises to the chloroplast. The protein resides in the membrane. In Arabidopsis thaliana (Mouse-ear cress), this protein is Protein ABCI12, chloroplastic (ABCI12).